The following is a 362-amino-acid chain: MERIVVTLGERSYPITIASGLFNEPASFLPLKSGEQVMLVTSETLAPLYLDKVRGVLEQAGVNVDSVILPDGEQYKSLAVLDTVFTALLQKPHGRDTTLVALGGGVVGDLTGFAAASYQRGVRFIQVPTTLLSQVDSSVGGKTAVNHPLGKNMIGAFYQPASVVVDLDCLKTLPPRELASGLAEVIKYGIILDGAFFNWLEENLDALLRLDGPAMAYCIRRCCELKAEVVAADERETGLRALLNLGHTFGHAIEAEMGYGNWLHGEAVAAGMVMAARTSERLGQFSSAETQRIITLLTRAGLPVNGPREMSAQAYLPHMLRDKKVLAGEMRLILPLAIGKSKVRSGVSHELVLNAIADCQSA.

NAD(+)-binding positions include 71-76 (DGEQYK), 105-109 (GVVGD), 129-130 (TT), K142, K151, and 169-172 (CLKT). E184, H247, and H264 together coordinate Zn(2+).

Belongs to the sugar phosphate cyclases superfamily. Dehydroquinate synthase family. Requires NAD(+) as cofactor. It depends on Co(2+) as a cofactor. Zn(2+) is required as a cofactor.

Its subcellular location is the cytoplasm. The enzyme catalyses 7-phospho-2-dehydro-3-deoxy-D-arabino-heptonate = 3-dehydroquinate + phosphate. It participates in metabolic intermediate biosynthesis; chorismate biosynthesis; chorismate from D-erythrose 4-phosphate and phosphoenolpyruvate: step 2/7. Functionally, catalyzes the conversion of 3-deoxy-D-arabino-heptulosonate 7-phosphate (DAHP) to dehydroquinate (DHQ). The sequence is that of 3-dehydroquinate synthase from Shigella flexneri.